A 568-amino-acid chain; its full sequence is MARVEL domain-containing protein 2 (568 aa).

Disordered stretches follow at residues 1 to 72 and 116 to 163; these read MSGG…YPSD and SGGV…SYNS. The Cytoplasmic portion of the chain corresponds to 1–211; the sequence is MSGGGSSSGP…YMKSWAGLLR (211 aa). The segment covering 29–46 has biased composition (basic and acidic residues); the sequence is ADPRHPETNLETLHDRDL. Over residues 52–62 the composition is skewed to pro residues; sequence PLPPPPLPLHP. Positions 205–379 constitute an MARVEL domain; sequence SWAGLLRILC…SAMVSLKLWR (175 aa). A helical transmembrane segment spans residues 212 to 232; that stretch reads ILCIVELLLGAAVFACVTAYI. The Extracellular portion of the chain corresponds to 233–266; that stretch reads HKDNEWYNMFGYSQPYGYTASMQGGYYYSGPKTP. A helical membrane pass occupies residues 267–287; it reads FVLVVAGLAWIVTIILLVLGM. Residues 288-303 lie on the Cytoplasmic side of the membrane; it reads SMYYRTILLDSTWWPL. The chain crosses the membrane as a helical span at residues 304–324; the sequence is TEFGINISLFILYMAGAIVYV. Residues 325 to 354 lie on the Extracellular side of the membrane; sequence NDTNRGGLCYYQLFNTPVNASFCRVEGGQT. A helical membrane pass occupies residues 355–375; that stretch reads AAIIFLFVSMLMYFISAMVSL. The Cytoplasmic portion of the chain corresponds to 376-568; sequence KLWRHESARK…KVMDWNDGYN (193 aa). Positions 451-562 constitute an OCEL domain; that stretch reads PDYVAKYQAI…RIQEYDKVMD (112 aa). A coiled-coil region spans residues 462 to 559; the sequence is AEDERERYKA…IKQRIQEYDK (98 aa).

Belongs to the ELL/occludin family.

It localises to the cell membrane. The protein resides in the cell junction. Its subcellular location is the tight junction. May play a role in the formation of the epithelial barrier. This is MARVEL domain-containing protein 2 (marveld2) from Xenopus tropicalis (Western clawed frog).